Here is a 254-residue protein sequence, read N- to C-terminus: Urease accessory protein UreF (254 aa).

Basic and acidic residues predominate over residues 1–11 (MDKGKSVKSTE). Residues 1–25 (MDKGKSVKSTEKSVGIPPKTPKTDN) are disordered.

Belongs to the UreF family. In terms of assembly, ureH, UreF and UreG form a complex that acts as a GTP-hydrolysis-dependent molecular chaperone, activating the urease apoprotein by helping to assemble the nickel containing metallocenter of UreC. The UreE protein probably delivers the nickel.

It localises to the cytoplasm. Its function is as follows. Required for maturation of urease via the functional incorporation of the urease nickel metallocenter. This chain is Urease accessory protein UreF, found in Helicobacter pylori (strain P12).